Consider the following 240-residue polypeptide: MSIISEHGFRMDGRRPAQIRNINTRLGLNRNAEGSCYLEHGNTKVLCAVYGPYESKASKRLEDRCAIVCQYSTTTFSGLERKNRPRGDRKSTEISRLLEKAFESVILTESFPRSQIDIFCEVIQGDGSNLAACVNATSLALADAGIPMKGIASAATCGIVETKPIVDLTSREETDLLPRVTLATICGRDEVILVELQNRLHIDHLSVVMDAAKATCADVYECLAVVAQQHLKACAPILGN.

It belongs to the RNase PH family. As to quaternary structure, component of the RNA exosome complex.

Its subcellular location is the cytoplasm. It localises to the nucleus. The protein resides in the nucleolus. It is found in the nucleoplasm. Non-catalytic component of the RNA exosome complex which has 3'-&gt;5' exoribonuclease activity and participates in a multitude of cellular RNA processing and degradation events. In Caenorhabditis briggsae, this protein is Putative exosome complex component RRP41 (exos-4.1).